We begin with the raw amino-acid sequence, 353 residues long: Uroporphyrinogen decarboxylase (353 aa).

Residues 33 to 37 (RQAGR), Asp-82, Tyr-158, Ser-213, and His-332 each bind substrate.

Belongs to the uroporphyrinogen decarboxylase family. Homodimer.

The protein resides in the cytoplasm. It carries out the reaction uroporphyrinogen III + 4 H(+) = coproporphyrinogen III + 4 CO2. Its pathway is porphyrin-containing compound metabolism; protoporphyrin-IX biosynthesis; coproporphyrinogen-III from 5-aminolevulinate: step 4/4. Its function is as follows. Catalyzes the decarboxylation of four acetate groups of uroporphyrinogen-III to yield coproporphyrinogen-III. The polypeptide is Uroporphyrinogen decarboxylase (Gluconobacter oxydans (strain 621H) (Gluconobacter suboxydans)).